Here is a 299-residue protein sequence, read N- to C-terminus: CMRF35-like molecule 8 (299 aa).

A signal peptide spans 1-17; it reads MWLPWALLLLWVPGCFA. Residues 18–180 are Extracellular-facing; sequence LSKCRTVAGP…TEEVVNSQLP (163 aa). Positions 19-123 constitute an Ig-like V-type domain; the sequence is SKCRTVAGPV…HDPVVEVEVS (105 aa). A disulfide bond links Cys36 and Cys103. Residues Asn83 and Asn92 are each glycosylated (N-linked (GlcNAc...) asparagine). Residues 181–201 traverse the membrane as a helical segment; sequence LLLSLLALLLLLLVGASLLAW. At 202–299 the chain is on the cytoplasmic side; it reads RMFQKWIKAG…DSDYSVIRKT (98 aa). The tract at residues 278-299 is disordered; that stretch reads RIAAQRPREEEPDSDYSVIRKT. Tyr293 carries the phosphotyrosine modification.

This sequence belongs to the CD300 family. As to quaternary structure, upon tyrosine-phosphorylation, interacts with PTN6/SHP-1 and PTPN11/SHP-2 and INPP5D. Phosphorylated on tyrosine. Post-translationally, N-glycosylated. As to expression, expressed not only by natural killer (NK) cells but also by T-cell subsets, B-cells, dendritic cells, mast cells, granulocytes and monocytes.

It is found in the cell membrane. In terms of biological role, inhibitory receptor which may contribute to the down-regulation of cytolytic activity in natural killer (NK) cells, and to the down-regulation of mast cell degranulation. Negatively regulates the Toll-like receptor (TLR) signaling mediated by MYD88 but not TRIF through activation of PTPN6. The chain is CMRF35-like molecule 8 (CD300A) from Homo sapiens (Human).